A 251-amino-acid chain; its full sequence is Probable transcriptional regulatory protein cgR_1708 (251 aa).

The tract at residues 1–22 (MAGHSKWATTKHKKAANDAKRG) is disordered.

This sequence belongs to the TACO1 family.

The protein resides in the cytoplasm. The polypeptide is Probable transcriptional regulatory protein cgR_1708 (Corynebacterium glutamicum (strain R)).